Here is a 679-residue protein sequence, read N- to C-terminus: Protein SQS1 (679 aa).

Disordered regions lie at residues 1–40 (MAKR…RNNS), 76–161 (DSMR…PEPK), 242–315 (VSEE…PGFG), and 391–419 (PEEP…QDDE). Positions 16 to 32 (RGRRGGRAGHRGRGGRR) are enriched in basic residues. Positions 146-156 (GDDEPEGEYEP) are enriched in acidic residues. The segment covering 406-419 (ENYDDSEEDEQDDE) has biased composition (acidic residues). Residues 514 to 576 (GFHIENIIDE…HTRVLVQKGG (63 aa)) form the R3H domain. The region spanning 633–679 (QDNVGRRLLEKLGWTHGEGLGVHGNKGISEPLMARVKKNRSGLRYTE) is the G-patch domain.

This sequence belongs to the SQS1 family.

The protein localises to the cytoplasm. It localises to the nucleus. Its function is as follows. May be involved in splicing. This chain is Protein SQS1 (SQS1), found in Eremothecium gossypii (strain ATCC 10895 / CBS 109.51 / FGSC 9923 / NRRL Y-1056) (Yeast).